The sequence spans 123 residues: MARIAGVDLPRDKRVEIALTYIYGIGRPTANVILKKTGINPDTRVKDLTEEEVAKLRDEIEKNYKVEGELRREVALNIKRLIEIGCYRGIRHRKGLPVRGQRTRTNARTRKGPRRTVGVKRKK.

Positions 99–123 (RGQRTRTNARTRKGPRRTVGVKRKK) are disordered.

It belongs to the universal ribosomal protein uS13 family. Part of the 30S ribosomal subunit. Forms a loose heterodimer with protein S19. Forms two bridges to the 50S subunit in the 70S ribosome.

Its function is as follows. Located at the top of the head of the 30S subunit, it contacts several helices of the 16S rRNA. In the 70S ribosome it contacts the 23S rRNA (bridge B1a) and protein L5 of the 50S subunit (bridge B1b), connecting the 2 subunits; these bridges are implicated in subunit movement. Contacts the tRNAs in the A and P-sites. In Carboxydothermus hydrogenoformans (strain ATCC BAA-161 / DSM 6008 / Z-2901), this protein is Small ribosomal subunit protein uS13.